Reading from the N-terminus, the 88-residue chain is Putative defensin-like protein 228 (88 aa).

Positions 1–27 are cleaved as a signal peptide; the sequence is MMKSAILLMVSCVFMFLVVSYIQDVEG. 4 disulfides stabilise this stretch: C32–C88, C42–C66, C50–C82, and C64–C84.

Belongs to the DEFL family.

It is found in the secreted. The chain is Putative defensin-like protein 228 (SCRL3) from Arabidopsis thaliana (Mouse-ear cress).